The following is a 166-amino-acid chain: Phospholipase A2 myotoxin inhibitor protein (166 aa).

Positions 1–19 (MRLILLSGLLLLGTFLANG) are cleaved as a signal peptide. The 116-residue stretch at 46–161 (LKYAFLTVHK…CDDNLLVVCE (116 aa)) folds into the C-type lectin domain. 2 disulfides stabilise this stretch: Cys-83/Cys-160 and Cys-138/Cys-152. Asn-122 carries an N-linked (GlcNAc...) asparagine glycan.

It belongs to the alpha-type phospholipase A2 inhibitor family. As to quaternary structure, oligomer. Homotrimer; non-covalently linked. Post-translationally, glycosylated. The glycosylation has no role in the association of this PLI and PA2 enzyme. As to expression, expressed by the liver.

The protein resides in the secreted. This phospholipase A2 inhibitor binds directly phospholipase A2 in the presence or absence of calcium. Has anti-enzymatic, anti-myotoxic, anti-edema inducing, anti-cytotoxic, anti-bactericidal, and anti-lethal properties against basic and acidic phospholipases A2 from Bothrops venoms. In Bothrops moojeni (Lance-headed viper), this protein is Phospholipase A2 myotoxin inhibitor protein.